A 122-amino-acid chain; its full sequence is Small ribosomal subunit protein uS12c (122 aa).

Belongs to the universal ribosomal protein uS12 family. As to quaternary structure, part of the 30S ribosomal subunit.

The protein resides in the plastid. It localises to the chloroplast. In terms of biological role, with S4 and S5 plays an important role in translational accuracy. Located at the interface of the 30S and 50S subunits. This chain is Small ribosomal subunit protein uS12c (rps12), found in Illicium oligandrum (Star anise).